The primary structure comprises 538 residues: Phosphoenolpyruvate carboxykinase (ATP) (538 aa).

Positions 64, 205, and 211 each coordinate substrate. Residues Lys-211, His-230, and 246–254 (GLSGTGKTT) each bind ATP. Residues Lys-211 and His-230 each coordinate Mn(2+). Mn(2+) is bound at residue Asp-267. Residues Glu-295, Arg-331, 447 to 448 (RI), and Thr-453 each bind ATP. Substrate is bound at residue Arg-331.

It belongs to the phosphoenolpyruvate carboxykinase (ATP) family. As to quaternary structure, monomer. Mn(2+) is required as a cofactor.

The protein localises to the cytoplasm. The catalysed reaction is oxaloacetate + ATP = phosphoenolpyruvate + ADP + CO2. Its pathway is carbohydrate biosynthesis; gluconeogenesis. Involved in the gluconeogenesis. Catalyzes the conversion of oxaloacetate (OAA) to phosphoenolpyruvate (PEP) through direct phosphoryl transfer between the nucleoside triphosphate and OAA. The sequence is that of Phosphoenolpyruvate carboxykinase (ATP) from Histophilus somni (strain 129Pt) (Haemophilus somnus).